A 189-amino-acid chain; its full sequence is Ribosome maturation factor RimM (189 aa).

The PRC barrel domain maps to 113 to 189 (DGEYYWVDLL…TIVADWQPDY (77 aa)).

The protein belongs to the RimM family. As to quaternary structure, binds ribosomal protein uS19.

Its subcellular location is the cytoplasm. Its function is as follows. An accessory protein needed during the final step in the assembly of 30S ribosomal subunit, possibly for assembly of the head region. Essential for efficient processing of 16S rRNA. May be needed both before and after RbfA during the maturation of 16S rRNA. It has affinity for free ribosomal 30S subunits but not for 70S ribosomes. This chain is Ribosome maturation factor RimM, found in Delftia acidovorans (strain DSM 14801 / SPH-1).